The following is a 302-amino-acid chain: Glutaminase (302 aa).

Substrate-binding residues include serine 61, asparagine 111, glutamate 155, asparagine 162, tyrosine 186, tyrosine 238, and valine 256.

The protein belongs to the glutaminase family. In terms of assembly, homotetramer.

It carries out the reaction L-glutamine + H2O = L-glutamate + NH4(+). The sequence is that of Glutaminase from Pseudomonas fluorescens (strain SBW25).